A 314-amino-acid polypeptide reads, in one-letter code: Methylglutaconyl-CoA hydratase, mitochondrial (314 aa).

The transit peptide at methionine 1–tyrosine 42 directs the protein to the mitochondrion. Lysine 75 bears the N6-acetyllysine; alternate mark. The residue at position 75 (lysine 75) is an N6-succinyllysine; alternate. The RNA-binding stretch occupies residues lysine 80 to lysine 94. Residue lysine 84 is modified to N6-succinyllysine. Residues lysine 88 and lysine 119 each carry the N6-acetyllysine; alternate modification. An N6-succinyllysine; alternate mark is found at lysine 88 and lysine 119. N6-succinyllysine occurs at positions 123 and 135. N6-acetyllysine; alternate is present on residues lysine 179 and lysine 186. 2 positions are modified to N6-succinyllysine; alternate: lysine 179 and lysine 186. N6-succinyllysine is present on lysine 304.

This sequence belongs to the enoyl-CoA hydratase/isomerase family. In terms of assembly, homohexamer. In terms of tissue distribution, detected in heart, brain, liver, spleen, skeletal muscle and kidney. Expressed in brain, kidney, liver and spleen tissue (at protein level).

The protein resides in the mitochondrion. It carries out the reaction (3S)-3-hydroxy-3-methylglutaryl-CoA = 3-methyl-(2E)-glutaconyl-CoA + H2O. The catalysed reaction is (3S)-citramalyl-CoA = itaconyl-CoA + H2O. It catalyses the reaction 3-hydroxyisovaleryl-CoA = 3-methylbut-2-enoyl-CoA + H2O. The enzyme catalyses (S)-3-hydroxyglutaryl-CoA = (2E)-glutaconyl-CoA + H2O. It functions in the pathway amino-acid degradation; L-leucine degradation; (S)-3-hydroxy-3-methylglutaryl-CoA from 3-isovaleryl-CoA: step 3/3. Functionally, catalyzes the fifth step in the leucine degradation pathway, the reversible hydration of 3-methylglutaconyl-CoA (3-MG-CoA) to 3-hydroxy-3-methylglutaryl-CoA (HMG-CoA). Can catalyze the reverse reaction but at a much lower rate in vitro. HMG-CoA is then quickly degraded by another enzyme (such as HMG-CoA lyase) to give acetyl-CoA and acetoacetate. Uses other substrates such as (2E)-glutaconyl-CoA efficiently in vitro, and to a lesser extent 3-methylcrotonyl-CoA (3-methyl-(2E)-butenoyl-CoA), crotonyl-CoA ((2E)-butenoyl-CoA) and 3-hydroxybutanoyl-CoA (the missing carboxylate reduces affinity to the active site). Originally it was identified as an RNA-binding protein as it binds to AU-rich elements (AREs) in vitro. AREs direct rapid RNA degradation and mRNA deadenylation. Might have itaconyl-CoA hydratase activity, converting itaconyl-CoA into citramalyl-CoA in the C5-dicarboxylate catabolism pathway. The C5-dicarboxylate catabolism pathway is required to detoxify itaconate, an antimicrobial metabolite and immunomodulator produced by macrophages during certain infections, that can act as a vitamin B12-poisoning metabolite. The chain is Methylglutaconyl-CoA hydratase, mitochondrial (Auh) from Mus musculus (Mouse).